We begin with the raw amino-acid sequence, 568 residues long: CRISPR-associated exonuclease Cas4/endonuclease Cas1 fusion (568 aa).

The interval 1-209 (MSVVVTRYRG…KCSLAPVCLP (209 aa)) is CRISPR-associated exonuclease Cas4. [4Fe-4S] cluster is bound at residue cysteine 43. Mn(2+) contacts are provided by aspartate 95 and glutamate 108. Cysteine 198, cysteine 201, and cysteine 207 together coordinate [4Fe-4S] cluster. Positions 232 to 568 (VLHVATPGTR…PGLFATFRLR (337 aa)) are CRISPR-associated endonuclease Cas1. Mn(2+)-binding residues include glutamate 390, histidine 459, and glutamate 474.

This sequence in the N-terminal section; belongs to the CRISPR-associated exonuclease Cas4 family. It in the C-terminal section; belongs to the CRISPR-associated endonuclease Cas1 family. Homodimer, forms a heterotetramer with a Cas2 homodimer. The cofactor is [4Fe-4S] cluster. Mg(2+) is required as a cofactor. It depends on Mn(2+) as a cofactor.

It carries out the reaction exonucleolytic cleavage in the 5'- to 3'-direction to yield nucleoside 3'-phosphates.. Its function is as follows. CRISPR (clustered regularly interspaced short palindromic repeat), is an adaptive immune system that provides protection against mobile genetic elements (viruses, transposable elements and conjugative plasmids). CRISPR clusters contain spacers, sequences complementary to antecedent mobile elements, and target invading nucleic acids. CRISPR clusters are transcribed and processed into CRISPR RNA (crRNA). The Cas4 region acts as a ssDNA exonuclease, while the Cas1 region acts as a dsDNA endonuclease. Involved in the integration of spacer DNA into the CRISPR cassette. The chain is CRISPR-associated exonuclease Cas4/endonuclease Cas1 fusion (cas4-cas1) from Myxococcus xanthus (strain DK1622).